Consider the following 344-residue polypeptide: 2,3,4,5-tetrahydropyridine-2,6-dicarboxylate N-succinyltransferase (344 aa).

E205 lines the Mg(2+) pocket. E221 acts as the Acyl-anhydride intermediate in catalysis. Succinyl-CoA is bound by residues R223, G238, S241, A264, E279–A280, G287, K304, and R317–S320.

This sequence belongs to the type 2 tetrahydrodipicolinate N-succinyltransferase family. In terms of assembly, homotrimer.

It is found in the cytoplasm. It carries out the reaction (S)-2,3,4,5-tetrahydrodipicolinate + succinyl-CoA + H2O = (S)-2-succinylamino-6-oxoheptanedioate + CoA. Its pathway is amino-acid biosynthesis; L-lysine biosynthesis via DAP pathway; LL-2,6-diaminopimelate from (S)-tetrahydrodipicolinate (succinylase route): step 1/3. Functionally, catalyzes the conversion of the cyclic tetrahydrodipicolinate (THDP) into the acyclic N-succinyl-L-2-amino-6-oxopimelate using succinyl-CoA. The polypeptide is 2,3,4,5-tetrahydropyridine-2,6-dicarboxylate N-succinyltransferase (Pseudomonas putida (strain ATCC 47054 / DSM 6125 / CFBP 8728 / NCIMB 11950 / KT2440)).